The chain runs to 316 residues: Small ribosomal subunit biogenesis GTPase RsgA (316 aa).

The segment at 1-20 is disordered; sequence MSKLSHQQQRRIHNHRQNKL. Positions 8 to 18 are enriched in basic residues; the sequence is QQRRIHNHRQN. The region spanning 92-251 is the CP-type G domain; it reads AGKLKPVASN…IIDTPGVRGF (160 aa). GTP contacts are provided by residues 139–142 and 193–201; these read NKSD and GQSGVGKSS. Cysteine 275, cysteine 280, histidine 282, and cysteine 288 together coordinate Zn(2+).

Belongs to the TRAFAC class YlqF/YawG GTPase family. RsgA subfamily. Monomer. Associates with 30S ribosomal subunit, binds 16S rRNA. The cofactor is Zn(2+).

The protein localises to the cytoplasm. In terms of biological role, one of several proteins that assist in the late maturation steps of the functional core of the 30S ribosomal subunit. Helps release RbfA from mature subunits. May play a role in the assembly of ribosomal proteins into the subunit. Circularly permuted GTPase that catalyzes slow GTP hydrolysis, GTPase activity is stimulated by the 30S ribosomal subunit. This is Small ribosomal subunit biogenesis GTPase RsgA from Dichelobacter nodosus (strain VCS1703A).